Consider the following 110-residue polypeptide: METLAQHRHARSSAQKVRLVADLIRGKKVSQALDILTYTNKKAAVLVKKVLESAIANAEHNDGADIDDLKVAKIFVDEGPSMKRIMPRAKGRADRILKRTSHITVVVSDR.

The protein belongs to the universal ribosomal protein uL22 family. As to quaternary structure, part of the 50S ribosomal subunit.

Its function is as follows. This protein binds specifically to 23S rRNA; its binding is stimulated by other ribosomal proteins, e.g. L4, L17, and L20. It is important during the early stages of 50S assembly. It makes multiple contacts with different domains of the 23S rRNA in the assembled 50S subunit and ribosome. The globular domain of the protein is located near the polypeptide exit tunnel on the outside of the subunit, while an extended beta-hairpin is found that lines the wall of the exit tunnel in the center of the 70S ribosome. This is Large ribosomal subunit protein uL22 from Klebsiella pneumoniae (strain 342).